The chain runs to 220 residues: Deoxyribose-phosphate aldolase (220 aa).

Asp-89 functions as the Proton donor/acceptor in the catalytic mechanism. The active-site Schiff-base intermediate with acetaldehyde is the Lys-152. The active-site Proton donor/acceptor is Lys-181.

Belongs to the DeoC/FbaB aldolase family. DeoC type 1 subfamily.

It is found in the cytoplasm. The enzyme catalyses 2-deoxy-D-ribose 5-phosphate = D-glyceraldehyde 3-phosphate + acetaldehyde. It participates in carbohydrate degradation; 2-deoxy-D-ribose 1-phosphate degradation; D-glyceraldehyde 3-phosphate and acetaldehyde from 2-deoxy-alpha-D-ribose 1-phosphate: step 2/2. Catalyzes a reversible aldol reaction between acetaldehyde and D-glyceraldehyde 3-phosphate to generate 2-deoxy-D-ribose 5-phosphate. The chain is Deoxyribose-phosphate aldolase from Enterococcus faecalis (strain ATCC 700802 / V583).